A 119-amino-acid chain; its full sequence is Ribonuclease P protein component (119 aa).

It belongs to the RnpA family. Consists of a catalytic RNA component (M1 or rnpB) and a protein subunit.

It carries out the reaction Endonucleolytic cleavage of RNA, removing 5'-extranucleotides from tRNA precursor.. Functionally, RNaseP catalyzes the removal of the 5'-leader sequence from pre-tRNA to produce the mature 5'-terminus. It can also cleave other RNA substrates such as 4.5S RNA. The protein component plays an auxiliary but essential role in vivo by binding to the 5'-leader sequence and broadening the substrate specificity of the ribozyme. The sequence is that of Ribonuclease P protein component from Escherichia coli O157:H7.